Reading from the N-terminus, the 101-residue chain is Small ribosomal subunit protein uS14 (101 aa).

It belongs to the universal ribosomal protein uS14 family. Part of the 30S ribosomal subunit. Contacts proteins S3 and S10.

Binds 16S rRNA, required for the assembly of 30S particles and may also be responsible for determining the conformation of the 16S rRNA at the A site. In Francisella tularensis subsp. novicida (strain U112), this protein is Small ribosomal subunit protein uS14.